An 804-amino-acid polypeptide reads, in one-letter code: Probable replication endonuclease from prophage-like region (804 aa).

Residues tyrosine 498 and tyrosine 502 each act as O-(5'-phospho-DNA)-tyrosine intermediate in the active site.

It belongs to the phage GPA family.

Its function is as follows. Possible endonuclease which induces a single-strand cut and initiates DNA replication. This Escherichia coli O6:H1 (strain CFT073 / ATCC 700928 / UPEC) protein is Probable replication endonuclease from prophage-like region.